A 245-amino-acid polypeptide reads, in one-letter code: Phycocyanobilin:ferredoxin oxidoreductase (245 aa).

This sequence belongs to the HY2 family.

It catalyses the reaction (2R,3Z)-phycocyanobilin + 4 oxidized [2Fe-2S]-[ferredoxin] = biliverdin IXalpha + 4 reduced [2Fe-2S]-[ferredoxin] + 4 H(+). Catalyzes the four-electron reduction of biliverdin IX-alpha (2-electron reduction at both the A and D rings); the reaction proceeds via an isolatable 2-electron intermediate, 181,182-dihydrobiliverdin. The sequence is that of Phycocyanobilin:ferredoxin oxidoreductase from Trichodesmium erythraeum (strain IMS101).